Reading from the N-terminus, the 129-residue chain is Succinate dehydrogenase cytochrome b556 subunit (129 aa).

Residues 1–26 lie on the Cytoplasmic side of the membrane; sequence MIRNVKKQRPVNLDLQTIRFPITAIA. A helical transmembrane segment spans residues 27–52; that stretch reads SILHRVSGVITFIAVGILLWLLGTSL. Residues 53-68 are Periplasmic-facing; sequence SSPEGFQQAADIMDGF. A helical membrane pass occupies residues 69–89; that stretch reads IVKFIMWGILTALAYHVIVGI. His84 is a binding site for heme. The Cytoplasmic segment spans residues 90-108; the sequence is RHMLMDFGYLEETFEAGQR. The helical transmembrane segment at 109 to 129 threads the bilayer; that stretch reads SAKISFVITVVLSLLAGVLVW.

It belongs to the cytochrome b560 family. In terms of assembly, part of an enzyme complex containing four subunits: a flavoprotein, an iron-sulfur protein, plus two membrane-anchoring proteins, SdhC and SdhD. The complex can form homotrimers. Requires heme as cofactor.

The protein localises to the cell inner membrane. The protein operates within carbohydrate metabolism; tricarboxylic acid cycle. Membrane-anchoring subunit of succinate dehydrogenase (SDH). The sequence is that of Succinate dehydrogenase cytochrome b556 subunit (sdhC) from Salmonella typhi.